The chain runs to 430 residues: Histidinol dehydrogenase (430 aa).

3 residues coordinate NAD(+): tyrosine 129, glutamine 190, and asparagine 213. Substrate is bound by residues serine 236, glutamine 258, and histidine 261. Positions 258 and 261 each coordinate Zn(2+). Active-site proton acceptor residues include glutamate 326 and histidine 327. Positions 327, 360, 414, and 419 each coordinate substrate. Aspartate 360 is a binding site for Zn(2+). Position 419 (histidine 419) interacts with Zn(2+).

This sequence belongs to the histidinol dehydrogenase family. It depends on Zn(2+) as a cofactor.

The enzyme catalyses L-histidinol + 2 NAD(+) + H2O = L-histidine + 2 NADH + 3 H(+). It functions in the pathway amino-acid biosynthesis; L-histidine biosynthesis; L-histidine from 5-phospho-alpha-D-ribose 1-diphosphate: step 9/9. In terms of biological role, catalyzes the sequential NAD-dependent oxidations of L-histidinol to L-histidinaldehyde and then to L-histidine. This Gluconobacter oxydans (strain 621H) (Gluconobacter suboxydans) protein is Histidinol dehydrogenase.